The sequence spans 180 residues: NADH-quinone oxidoreductase subunit I (180 aa).

4Fe-4S ferredoxin-type domains lie at 48 to 80 and 90 to 119; these read IVLT…LQKS and EFFR…LTPD. Residues cysteine 60, cysteine 63, cysteine 66, cysteine 70, cysteine 99, cysteine 102, cysteine 105, and cysteine 109 each contribute to the [4Fe-4S] cluster site. Residues 161 to 174 show a composition bias toward basic and acidic residues; it reads KPKGDAENEAKPID. The interval 161-180 is disordered; the sequence is KPKGDAENEAKPIDVKSLLP.

It belongs to the complex I 23 kDa subunit family. As to quaternary structure, NDH-1 is composed of 14 different subunits. Subunits NuoA, H, J, K, L, M, N constitute the membrane sector of the complex. Requires [4Fe-4S] cluster as cofactor.

The protein resides in the cell inner membrane. It carries out the reaction a quinone + NADH + 5 H(+)(in) = a quinol + NAD(+) + 4 H(+)(out). In terms of biological role, NDH-1 shuttles electrons from NADH, via FMN and iron-sulfur (Fe-S) centers, to quinones in the respiratory chain. The immediate electron acceptor for the enzyme in this species is believed to be ubiquinone. Couples the redox reaction to proton translocation (for every two electrons transferred, four hydrogen ions are translocated across the cytoplasmic membrane), and thus conserves the redox energy in a proton gradient. The polypeptide is NADH-quinone oxidoreductase subunit I (Aeromonas hydrophila subsp. hydrophila (strain ATCC 7966 / DSM 30187 / BCRC 13018 / CCUG 14551 / JCM 1027 / KCTC 2358 / NCIMB 9240 / NCTC 8049)).